The sequence spans 447 residues: N-succinylarginine dihydrolase (447 aa).

Residues 19-28 (AGLSFGNEAS), N110, and 137-138 (HR) contribute to the substrate site. The active site involves E174. R212 is a substrate binding site. H248 is a catalytic residue. Substrate contacts are provided by D250 and N359. The active-site Nucleophile is the C365.

It belongs to the succinylarginine dihydrolase family. Homodimer.

It carries out the reaction N(2)-succinyl-L-arginine + 2 H2O + 2 H(+) = N(2)-succinyl-L-ornithine + 2 NH4(+) + CO2. The protein operates within amino-acid degradation; L-arginine degradation via AST pathway; L-glutamate and succinate from L-arginine: step 2/5. Catalyzes the hydrolysis of N(2)-succinylarginine into N(2)-succinylornithine, ammonia and CO(2). This is N-succinylarginine dihydrolase from Salmonella schwarzengrund (strain CVM19633).